The chain runs to 204 residues: N-(5'-phosphoribosyl)anthranilate isomerase (204 aa).

Belongs to the TrpF family.

It catalyses the reaction N-(5-phospho-beta-D-ribosyl)anthranilate = 1-(2-carboxyphenylamino)-1-deoxy-D-ribulose 5-phosphate. It functions in the pathway amino-acid biosynthesis; L-tryptophan biosynthesis; L-tryptophan from chorismate: step 3/5. The protein is N-(5'-phosphoribosyl)anthranilate isomerase of Desulforudis audaxviator (strain MP104C).